The primary structure comprises 110 residues: MEARAKLSFARLSPRKTRLVVDMVRGRGIQDALTILRFSPQPSAKLVSKLLQSAVANAEQKGASDVDRLFVKTIFVDAGPVLKRFTPRAMGRASKIRKPTSHVTVVLADK.

Belongs to the universal ribosomal protein uL22 family. As to quaternary structure, part of the 50S ribosomal subunit.

Functionally, this protein binds specifically to 23S rRNA; its binding is stimulated by other ribosomal proteins, e.g. L4, L17, and L20. It is important during the early stages of 50S assembly. It makes multiple contacts with different domains of the 23S rRNA in the assembled 50S subunit and ribosome. In terms of biological role, the globular domain of the protein is located near the polypeptide exit tunnel on the outside of the subunit, while an extended beta-hairpin is found that lines the wall of the exit tunnel in the center of the 70S ribosome. The chain is Large ribosomal subunit protein uL22 from Geobacter metallireducens (strain ATCC 53774 / DSM 7210 / GS-15).